An 820-amino-acid chain; its full sequence is Phosphoenolpyruvate synthase (820 aa).

The Tele-phosphohistidine intermediate role is filled by histidine 438. Substrate-binding residues include arginine 539, arginine 587, glutamate 689, glycine 710, serine 711, asparagine 712, and aspartate 713. Mg(2+) is bound at residue glutamate 689. Aspartate 713 serves as a coordination point for Mg(2+). Cysteine 762 acts as the Proton donor in catalysis.

It belongs to the PEP-utilizing enzyme family. It depends on Mg(2+) as a cofactor.

It catalyses the reaction pyruvate + ATP + H2O = phosphoenolpyruvate + AMP + phosphate + 2 H(+). It functions in the pathway carbohydrate biosynthesis; gluconeogenesis. Catalyzes the phosphorylation of pyruvate to phosphoenolpyruvate. The chain is Phosphoenolpyruvate synthase (ppsA) from Aeropyrum pernix (strain ATCC 700893 / DSM 11879 / JCM 9820 / NBRC 100138 / K1).